A 243-amino-acid polypeptide reads, in one-letter code: Uridylate kinase (243 aa).

Lysine 12 to glycine 15 lines the ATP pocket. Residues glycine 20–glycine 25 are involved in allosteric activation by GTP. Residue glycine 56 coordinates UMP. The ATP site is built by glycine 57 and arginine 61. UMP contacts are provided by residues aspartate 76 and threonine 137 to threonine 144. The ATP site is built by asparagine 165, tyrosine 171, and aspartate 174.

The protein belongs to the UMP kinase family. In terms of assembly, homohexamer.

It localises to the cytoplasm. The enzyme catalyses UMP + ATP = UDP + ADP. It participates in pyrimidine metabolism; CTP biosynthesis via de novo pathway; UDP from UMP (UMPK route): step 1/1. Its activity is regulated as follows. Allosterically activated by GTP. Inhibited by UTP. Its function is as follows. Catalyzes the reversible phosphorylation of UMP to UDP. This Oenococcus oeni (strain ATCC BAA-331 / PSU-1) protein is Uridylate kinase.